Consider the following 256-residue polypeptide: Nuclear shuttle protein (256 aa).

Residues 1–16 are compositionally biased toward polar residues; it reads MYSTSNRRGRSQTQRG. Residues 1 to 46 are disordered; that stretch reads MYSTSNRRGRSQTQRGSHVRRTGVKRSYGAARGDDRRRPNVVSKTQ. The Bipartite nuclear localization signal motif lies at 21–42; it reads RTGVKRSYGAARGDDRRRPNVV. Residues 81-96 carry the Nuclear localization signal motif; the sequence is SYVKTVPNRTRTYIKL. The interval 150–187 is interaction with Arabidopsis thaliana NSI protein; sequence ELFGARIHCHGNLSVVPALKDRYYIRHVTKRVVSLEKD. Positions 177–198 match the Nuclear export signal motif; it reads VTKRVVSLEKDTLLIDLHGTTQ.

This sequence belongs to the begomovirus nuclear shuttle protein family. In terms of assembly, binds to single-stranded and double-stranded viral DNA. Interacts with the host nuclear shuttle interacting (NSI) protein. This interaction may allow NSP to recruit NSI monomers to the viral genome and thus regulate nuclear export of viral genome by NSP.

It localises to the host nucleus. Its subcellular location is the host cytoplasm. The protein resides in the host cell membrane. Functionally, binds to the genomic viral ssDNA, shuttles it into and out of the cell nucleus. Begomoviruses use 2 proteins to transport their DNA from cell to cell. The nuclear shuttle protein (NSP) shuttles it between nucleus and cytoplasm and the movement protein (MP) probably transports the DNA-NSP complex to the cell periphery and facilitates movement across the cell wall. The sequence is that of Nuclear shuttle protein from Squash leaf curl virus (SLCV).